The chain runs to 240 residues: Izumo sperm-egg fusion protein 3 (240 aa).

An N-terminal signal peptide occupies residues methionine 1 to glycine 22. Over cysteine 23–glutamate 176 the chain is Extracellular. A helical membrane pass occupies residues isoleucine 177–phenylalanine 197. Residues histidine 198 to glutamate 240 are Cytoplasmic-facing.

It belongs to the Izumo family. Monomer and homodimer.

It localises to the cell membrane. The sequence is that of Izumo sperm-egg fusion protein 3 (IZUMO3) from Bos taurus (Bovine).